The following is a 31-amino-acid chain: Cycloviolacin-O25 (31 aa).

The cyclopeptide (Asp-Asn) cross-link spans 1-31 (DIFCGETCAFIPCITHVPGTCSCKSKVCYFN). 3 disulfide bridges follow: Cys4-Cys21, Cys8-Cys23, and Cys13-Cys28.

In terms of processing, this is a cyclic peptide. As to expression, expressed in roots and runners but not in leaves, petals and petioles (at protein level).

In terms of biological role, probably participates in a plant defense mechanism. This chain is Cycloviolacin-O25, found in Viola odorata (Sweet violet).